We begin with the raw amino-acid sequence, 156 residues long: ATP synthase subunit b (156 aa).

The chain crosses the membrane as a helical span at residues 7–27; the sequence is IFFQMLVFFVLGWFTMKFVWP.

It belongs to the ATPase B chain family. As to quaternary structure, F-type ATPases have 2 components, F(1) - the catalytic core - and F(0) - the membrane proton channel. F(1) has five subunits: alpha(3), beta(3), gamma(1), delta(1), epsilon(1). F(0) has three main subunits: a(1), b(2) and c(10-14). The alpha and beta chains form an alternating ring which encloses part of the gamma chain. F(1) is attached to F(0) by a central stalk formed by the gamma and epsilon chains, while a peripheral stalk is formed by the delta and b chains.

It localises to the cell inner membrane. In terms of biological role, f(1)F(0) ATP synthase produces ATP from ADP in the presence of a proton or sodium gradient. F-type ATPases consist of two structural domains, F(1) containing the extramembraneous catalytic core and F(0) containing the membrane proton channel, linked together by a central stalk and a peripheral stalk. During catalysis, ATP synthesis in the catalytic domain of F(1) is coupled via a rotary mechanism of the central stalk subunits to proton translocation. Component of the F(0) channel, it forms part of the peripheral stalk, linking F(1) to F(0). The polypeptide is ATP synthase subunit b (Bordetella bronchiseptica (strain ATCC BAA-588 / NCTC 13252 / RB50) (Alcaligenes bronchisepticus)).